Here is a 134-residue protein sequence, read N- to C-terminus: Interferon-induced transmembrane protein 5 (134 aa).

Positions 1–20 (MDTSYPREDPRAPSSRKADA) are enriched in basic and acidic residues. The tract at residues 1-31 (MDTSYPREDPRAPSSRKADAAAHTALSMGTP) is disordered. The Extracellular portion of the chain corresponds to 1–39 (MDTSYPREDPRAPSSRKADAAAHTALSMGTPGPTPRDHM). Residues 40–60 (LWSVFSTMYLNLCCLGFLALV) form a helical membrane-spanning segment. 3 S-palmitoyl cysteine lipidation sites follow: Cys-52, Cys-53, and Cys-86. Topologically, residues 61-88 (HSVKARDQKMAGNLEAARQYGSKAKCYN) are cytoplasmic. A helical transmembrane segment spans residues 89 to 109 (ILAAMWTLVPPLLLLGLVVTG). Residues 110 to 134 (ALHLSKLAKDSAAFFSTKFDEEDYN) are Extracellular-facing.

This sequence belongs to the CD225/Dispanin family. Interacts with FKBP11. In terms of processing, palmitoylated. In terms of tissue distribution, detected in embryonic bone (at protein level). Highly expressed in osteoblasts of adults and embryos. Expressed in primitive hemopoietic cells.

The protein resides in the cell membrane. Functionally, required for normal bone mineralization. The sequence is that of Interferon-induced transmembrane protein 5 (Ifitm5) from Mus musculus (Mouse).